Consider the following 804-residue polypeptide: Lon protease 2 (804 aa).

A Lon N-terminal domain is found at 6–199 (MPVCPVRGSV…AVLVLLEAEL (194 aa)). ATP is bound at residue 362–369 (GPPGVGKT). The 182-residue stretch at 598–779 (EPQVGVATGM…DQVLDLALVG (182 aa)) folds into the Lon proteolytic domain. Residues serine 685 and lysine 728 contribute to the active site.

The protein belongs to the peptidase S16 family. As to quaternary structure, homohexamer. Organized in a ring with a central cavity.

It localises to the cytoplasm. It carries out the reaction Hydrolysis of proteins in presence of ATP.. Functionally, ATP-dependent serine protease that mediates the selective degradation of mutant and abnormal proteins as well as certain short-lived regulatory proteins. Required for cellular homeostasis and for survival from DNA damage and developmental changes induced by stress. Degrades polypeptides processively to yield small peptide fragments that are 5 to 10 amino acids long. Binds to DNA in a double-stranded, site-specific manner. In Thermus thermophilus (strain ATCC BAA-163 / DSM 7039 / HB27), this protein is Lon protease 2.